A 294-amino-acid polypeptide reads, in one-letter code: GTPase Era (294 aa).

The region spanning Lys3 to Glu170 is the Era-type G domain. The G1 stretch occupies residues Gly11 to Ser18. Gly11–Ser18 provides a ligand contact to GTP. Residues Gln37–Asn41 are G2. The G3 stretch occupies residues Asp58–Gly61. Residues Asp58–Ile62 and Asn120–Asp123 each bind GTP. The tract at residues Asn120–Asp123 is G4. The G5 stretch occupies residues Ile149–Ala151. The KH type-2 domain maps to Leu201 to Lys278.

The protein belongs to the TRAFAC class TrmE-Era-EngA-EngB-Septin-like GTPase superfamily. Era GTPase family. As to quaternary structure, monomer.

It is found in the cytoplasm. The protein resides in the cell membrane. In terms of biological role, an essential GTPase that binds both GDP and GTP, with rapid nucleotide exchange. Plays a role in 16S rRNA processing and 30S ribosomal subunit biogenesis and possibly also in cell cycle regulation and energy metabolism. This chain is GTPase Era, found in Clostridium novyi (strain NT).